Consider the following 212-residue polypeptide: Thymidylate kinase (212 aa).

11 to 18 (GLEGAGKT) contributes to the ATP binding site.

It belongs to the thymidylate kinase family.

It catalyses the reaction dTMP + ATP = dTDP + ADP. In terms of biological role, phosphorylation of dTMP to form dTDP in both de novo and salvage pathways of dTTP synthesis. The protein is Thymidylate kinase of Buchnera aphidicola subsp. Schizaphis graminum (strain Sg).